Here is a 619-residue protein sequence, read N- to C-terminus: MHEQRSLTMNALTPAVSTGPLPASRKIHKSGVLHPQIRVPMREISVHPTAGEPPVIVYDPSGPYTDPTVETSIEKGLARLRHEWITARGDVEAYDGRHVRPEDNGFAVGERLTPEFPVRNRPLRARSGKAVTQLAYARAGIITPEMEFVAIRENLGREMLRGTLQRDGEAFGASIPDLVTPEFVRDEVAHGRAIIPANINHPESEPMIIGRNFLVKINANIGNSAVTSSMAEEVEKMVWAIRWGADTVMDLSTGRNIHNIRDWIVRNAPVPIGTVPLYQALEKVGGIAEDLTWEVYRDTLIEQAEQGVDYFTIHAGVRLHYIPLTVDRVTGIVSRGGSIMAKWCLHHHRESFLYEHFAEVCDICRAYDVSFSLGDGLRPGSIADANDAAQFAELETLGELTKIAWAKDCQVMIEGPGHVPMHKIKANMDKQLAVCGEAPFYTLGPLTTDIAPGYDHITSGIGAAMIGWFGTAMLCYVTPKEHLGLPDRNDVKIGVITYKIAAHAADLAKGHPAAKVRDDALSRARFEFRWEDQFNLSLDPETARSFHDQTLPKEAHKLAHFCSMCGPKFCSMRISHDIRAEAQKEGMAAMAAKYREGGDLYVPAEESGAPLMPEAHELS.

The span at 1 to 11 (MHEQRSLTMNA) shows a compositional bias: polar residues. The interval 1–25 (MHEQRSLTMNALTPAVSTGPLPASR) is disordered. Substrate contacts are provided by residues Asn-220, Met-249, Tyr-278, His-314, 334 to 336 (SRG), 375 to 378 (DGLR), and Glu-414. His-418 contacts Zn(2+). Tyr-441 contributes to the substrate binding site. His-482 provides a ligand contact to Zn(2+). Positions 562, 565, and 570 each coordinate [4Fe-4S] cluster.

The protein belongs to the ThiC family. In terms of assembly, homodimer. [4Fe-4S] cluster is required as a cofactor.

The catalysed reaction is 5-amino-1-(5-phospho-beta-D-ribosyl)imidazole + S-adenosyl-L-methionine = 4-amino-2-methyl-5-(phosphooxymethyl)pyrimidine + CO + 5'-deoxyadenosine + formate + L-methionine + 3 H(+). The protein operates within cofactor biosynthesis; thiamine diphosphate biosynthesis. Functionally, catalyzes the synthesis of the hydroxymethylpyrimidine phosphate (HMP-P) moiety of thiamine from aminoimidazole ribotide (AIR) in a radical S-adenosyl-L-methionine (SAM)-dependent reaction. This is Phosphomethylpyrimidine synthase from Mesorhizobium japonicum (strain LMG 29417 / CECT 9101 / MAFF 303099) (Mesorhizobium loti (strain MAFF 303099)).